The following is a 252-amino-acid chain: Chitooligosaccharide deacetylase (252 aa).

Histidine 61 and histidine 125 together coordinate Mg(2+).

The protein belongs to the YdjC deacetylase family. ChbG subfamily. In terms of assembly, homodimer. Requires Mg(2+) as cofactor.

It localises to the cytoplasm. It carries out the reaction N,N'-diacetylchitobiose + H2O = N-acetyl-beta-D-glucosaminyl-(1-&gt;4)-D-glucosamine + acetate. It catalyses the reaction diacetylchitobiose-6'-phosphate + H2O = N'-monoacetylchitobiose-6'-phosphate + acetate. It participates in glycan degradation; chitin degradation. Involved in the degradation of chitin. ChbG is essential for growth on the acetylated chitooligosaccharides chitobiose and chitotriose but is dispensable for growth on cellobiose and chitosan dimer, the deacetylated form of chitobiose. Deacetylation of chitobiose-6-P and chitotriose-6-P is necessary for both the activation of the chb promoter by the regulatory protein ChbR and the hydrolysis of phosphorylated beta-glucosides by the phospho-beta-glucosidase ChbF. Catalyzes the removal of only one acetyl group from chitobiose-6-P to yield monoacetylchitobiose-6-P, the inducer of ChbR and the substrate of ChbF. This chain is Chitooligosaccharide deacetylase, found in Salmonella schwarzengrund (strain CVM19633).